The chain runs to 94 residues: Co-chaperonin GroES (94 aa).

It belongs to the GroES chaperonin family. In terms of assembly, heptamer of 7 subunits arranged in a ring. Interacts with the chaperonin GroEL.

The protein resides in the cytoplasm. In terms of biological role, together with the chaperonin GroEL, plays an essential role in assisting protein folding. The GroEL-GroES system forms a nano-cage that allows encapsulation of the non-native substrate proteins and provides a physical environment optimized to promote and accelerate protein folding. GroES binds to the apical surface of the GroEL ring, thereby capping the opening of the GroEL channel. This is Co-chaperonin GroES from Exiguobacterium sp. (strain ATCC BAA-1283 / AT1b).